The following is a 114-amino-acid chain: UPF0102 protein HPAG1_0809 (114 aa).

This sequence belongs to the UPF0102 family.

The sequence is that of UPF0102 protein HPAG1_0809 from Helicobacter pylori (strain HPAG1).